An 898-amino-acid chain; its full sequence is DNA damage-induced apoptosis suppressor protein (898 aa).

Disordered regions lie at residues 191 to 210 (CGSQEHSSQSLTSDDSDSDL), 643 to 670 (SINTSKEMPYRPSNNNLTPSSSGDHEGS), and 710 to 749 (YPINENRGQPSQKPSLQSISPSRYSRPRSQSDSECDFEES). 2 stretches are compositionally biased toward polar residues: residues 643–664 (SINTSKEMPYRPSNNNLTPSSS) and 710–725 (YPINENRGQPSQKPSL). The span at 726-741 (QSISPSRYSRPRSQSD) shows a compositional bias: low complexity.

In terms of tissue distribution, highly expressed in the testis, spleen and heart. Expressed at high levels in the primary spermatocytes and to a lesser extent in the round spermatids. Also found in the bone marrow, brain, lung, kidney and liver.

Its subcellular location is the cytoplasm. It is found in the nucleus. Functionally, may be an anti-apoptotic protein involved in DNA repair or cell survival. This Mus musculus (Mouse) protein is DNA damage-induced apoptosis suppressor protein (Ddias).